Here is a 430-residue protein sequence, read N- to C-terminus: 3-phosphoshikimate 1-carboxyvinyltransferase (430 aa).

The 3-phosphoshikimate site is built by Lys-33, Ser-34, and Arg-38. Lys-33 contributes to the phosphoenolpyruvate binding site. The phosphoenolpyruvate site is built by Gly-101 and Arg-129. Residues Ser-172, Ser-173, Gln-174, Ser-201, Glu-319, and His-346 each coordinate 3-phosphoshikimate. Gln-174 contacts phosphoenolpyruvate. The Proton acceptor role is filled by Glu-319. Phosphoenolpyruvate contacts are provided by Arg-350, Arg-391, and Lys-416.

It belongs to the EPSP synthase family. As to quaternary structure, monomer.

The protein resides in the cytoplasm. It carries out the reaction 3-phosphoshikimate + phosphoenolpyruvate = 5-O-(1-carboxyvinyl)-3-phosphoshikimate + phosphate. Its pathway is metabolic intermediate biosynthesis; chorismate biosynthesis; chorismate from D-erythrose 4-phosphate and phosphoenolpyruvate: step 6/7. Catalyzes the transfer of the enolpyruvyl moiety of phosphoenolpyruvate (PEP) to the 5-hydroxyl of shikimate-3-phosphate (S3P) to produce enolpyruvyl shikimate-3-phosphate and inorganic phosphate. The chain is 3-phosphoshikimate 1-carboxyvinyltransferase from Corynebacterium glutamicum (strain R).